Consider the following 281-residue polypeptide: Phytanoyl-CoA dioxygenase 1 (281 aa).

Residues K98, M137, 152 to 154, and W169 each bind 2-oxoglutarate; that span reads HQD. H152 and D154 together coordinate Fe cation. H237 contributes to the Fe cation binding site. 2-oxoglutarate is bound by residues S239 and R248.

It belongs to the PhyH family. It depends on Fe cation as a cofactor. The cofactor is L-ascorbate.

The enzyme catalyses phytanoyl-CoA + 2-oxoglutarate + O2 = 2-hydroxyphytanoyl-CoA + succinate + CO2. Its pathway is lipid metabolism; fatty acid metabolism. In terms of biological role, converts phytanoyl-CoA to 2-hydroxyphytanoyl-CoA. The chain is Phytanoyl-CoA dioxygenase 1 from Oryza sativa subsp. japonica (Rice).